The following is a 179-amino-acid chain: Large ribosomal subunit protein uL6 (179 aa).

Belongs to the universal ribosomal protein uL6 family. Part of the 50S ribosomal subunit.

Functionally, this protein binds to the 23S rRNA, and is important in its secondary structure. It is located near the subunit interface in the base of the L7/L12 stalk, and near the tRNA binding site of the peptidyltransferase center. This chain is Large ribosomal subunit protein uL6, found in Pelodictyon phaeoclathratiforme (strain DSM 5477 / BU-1).